A 450-amino-acid chain; its full sequence is Transcription factor SCREAM2 (450 aa).

Disordered regions lie at residues 1–47 (MNSD…NQND), 207–231 (RQSSSSKMCNSESSSEMRKSSYERE), and 244–265 (GLNYESDDHNTNNNKGKKKGMP). Low complexity predominate over residues 209–220 (SSSSKMCNSESS). The span at 221 to 230 (SEMRKSSYER) shows a compositional bias: basic and acidic residues. Positions 263–312 (GMPAKNLMAERRRRKKLNDRLYMLRSVVPKISKMDRASILGDAIDYLKEL) constitute a bHLH domain. One can recognise an ACT domain in the interval 378 to 450 (NIHMFCGRRP…LDTAGYAGLV (73 aa)).

As to quaternary structure, homodimer. Heterodimers with SPCH, MUTE, and FAMA. Expressed constitutively in roots, leaves, stems, and flowers. Broad expression within stomatal cell lineages of leaf epidermis, except in mature guard-cells.

Its subcellular location is the nucleus. In terms of biological role, mediates stomatal differentiation in the epidermis probably by controlling successive roles of SPCH, MUTE, and FAMA. Functions as a dimer with SPCH during stomatal initiation. The polypeptide is Transcription factor SCREAM2 (SCRM2) (Arabidopsis thaliana (Mouse-ear cress)).